Here is a 395-residue protein sequence, read N- to C-terminus: Zinc finger protein 385D (395 aa).

The Matrin-type 1 zinc-finger motif lies at 80 to 110 (ISCNICQLRFNSDSQAAAHYKGTKHAKKLKA). Over residues 169-193 (MTTEITSKVEKSPTTATGNSSCPST) the composition is skewed to polar residues. A disordered region spans residues 169-194 (MTTEITSKVEKSPTTATGNSSCPSTE). 2 consecutive Matrin-type zinc fingers follow at residues 204–234 (LYCSLCKVAVNSASQLEAHNSGTKHKTMLEA) and 267–297 (FHCEICDVHVNSETQLKQHISSRRHKDRAAG). Residues 282 to 309 (LKQHISSRRHKDRAAGKPPKPKYSPYNK) form a disordered region.

The protein resides in the nucleus. This is Zinc finger protein 385D (ZNF385D) from Homo sapiens (Human).